We begin with the raw amino-acid sequence, 649 residues long: Transmembrane and coiled-coil domains protein 1 (649 aa).

Position 1 is an N-acetylmethionine (Met1). Disordered regions lie at residues 1–37 (MEPSGSEQLYEDPDPGGKSQDAEARRQTESEQKLSKM), 58–83 (HQRRRSSVSPHDVQQIQTDPEPEVDL), 110–166 (RVPP…PTSS), and 197–222 (LAQTSSAVASSTDGSIHTESVDGIPD). The Cytoplasmic portion of the chain corresponds to 1–587 (MEPSGSEQLY…ARNLLGKLIN (587 aa)). A compositionally biased stretch (basic and acidic residues) spans 20–34 (QDAEARRQTESEQKL). A compositionally biased stretch (polar residues) spans 64 to 75 (SVSPHDVQQIQT). The span at 113-125 (PKMKRGTSLHSRR) shows a compositional bias: basic residues. The span at 156 to 166 (SSSTTDAPTSS) shows a compositional bias: low complexity. Positions 197–214 (LAQTSSAVASSTDGSIHT) are enriched in polar residues. Residues 224–310 (QRTKAAIAHL…KLREVEQNGI (87 aa)) are a coiled coil. Phosphoserine is present on residues Ser378 and Ser410. Residues 411–433 (PKYGSEEDCSSATSGSVGANSTT) are disordered. Over residues 420–433 (SSATSGSVGANSTT) the composition is skewed to polar residues. Positions 457-566 (ALLHEVQEIR…KMELQQQQQQ (110 aa)) form a coiled coil. 2 consecutive transmembrane segments (helical) span residues 588-608 (ILLAVMAVLLVFVSTVANCVV) and 621-641 (LFLVAFIAFLWKHWDALFSYV). Residues 642 to 649 (DRLFSPPR) lie on the Cytoplasmic side of the membrane.

Belongs to the TEX28 family. In terms of assembly, may form homodimers and heterodimers with TMCC2 or TMCC3 via the coiled-coil domains. Interacts with ribosomal proteins RPL4 and RPS6.

The protein resides in the endoplasmic reticulum membrane. Its function is as follows. Endoplasmic reticulum membrane protein that promotes endoplasmic reticulum-associated endosome fission. Localizes to contact sites between the endoplasmic reticulum and endosomes and acts by promoting recruitment of the endoplasmic reticulum to endosome tubules for fission. Endosome membrane fission of early and late endosomes is essential to separate regions destined for lysosomal degradation from carriers to be recycled to the plasma membrane. This chain is Transmembrane and coiled-coil domains protein 1 (Tmcc1), found in Mus musculus (Mouse).